A 545-amino-acid polypeptide reads, in one-letter code: Glutamine-dependent NAD(+) synthetase (545 aa).

The CN hydrolase domain maps to 5 to 247 (LRIAMAQFDF…DQWLVVDYMR (243 aa)). Catalysis depends on Glu46, which acts as the Proton acceptor; for glutaminase activity. The active-site For glutaminase activity is the Lys113. Residue Tyr119 coordinates L-glutamine. Cys151 (nucleophile; for glutaminase activity) is an active-site residue. Ser177 and Lys183 together coordinate L-glutamine. The tract at residues 269-545 (VWRAVVRGVQ…RYPISNAYRG (277 aa)) is ligase. 292-299 (GLSGGIDS) provides a ligand contact to ATP. A deamido-NAD(+)-binding site is contributed by Asn375. Thr399 serves as a coordination point for ATP. Positions 404 and 516 each coordinate deamido-NAD(+).

It in the C-terminal section; belongs to the NAD synthetase family.

The catalysed reaction is deamido-NAD(+) + L-glutamine + ATP + H2O = L-glutamate + AMP + diphosphate + NAD(+) + H(+). It functions in the pathway cofactor biosynthesis; NAD(+) biosynthesis; NAD(+) from deamido-NAD(+) (L-Gln route): step 1/1. In terms of biological role, catalyzes the ATP-dependent amidation of deamido-NAD to form NAD. Uses L-glutamine as a nitrogen source. The sequence is that of Glutamine-dependent NAD(+) synthetase from Xylella fastidiosa (strain 9a5c).